The sequence spans 552 residues: Thermosome subunit beta (552 aa).

It belongs to the TCP-1 chaperonin family. Forms a Heterooligomeric complex of two stacked nine-membered rings; one of alpha and the other of beta subunits. Post-translationally, the N-terminus is blocked.

In terms of biological role, molecular chaperone; binds unfolded polypeptides in vitro, and has a weak ATPase activity. This chain is Thermosome subunit beta (thsB), found in Sulfurisphaera tokodaii (strain DSM 16993 / JCM 10545 / NBRC 100140 / 7) (Sulfolobus tokodaii).